A 991-amino-acid chain; its full sequence is Valine--tRNA ligase (991 aa).

Residues 43 to 53 (PNVTGTLHMGH) carry the 'HIGH' region motif. The 'KMSKS' region signature appears at 582–586 (KMSKS). K585 is an ATP binding site. A disordered region spans residues 689–711 (AHSPAQHQAGQDGQDAPRTPQPR). Positions 693–704 (AQHQAGQDGQDA) are enriched in low complexity. A coiled-coil region spans residues 925–988 (LIDVDAERAR…TQLNGLRERR (64 aa)).

Belongs to the class-I aminoacyl-tRNA synthetase family. ValS type 1 subfamily. In terms of assembly, monomer.

It is found in the cytoplasm. It carries out the reaction tRNA(Val) + L-valine + ATP = L-valyl-tRNA(Val) + AMP + diphosphate. In terms of biological role, catalyzes the attachment of valine to tRNA(Val). As ValRS can inadvertently accommodate and process structurally similar amino acids such as threonine, to avoid such errors, it has a 'posttransfer' editing activity that hydrolyzes mischarged Thr-tRNA(Val) in a tRNA-dependent manner. The protein is Valine--tRNA ligase of Xylella fastidiosa (strain M12).